A 344-amino-acid chain; its full sequence is GDSL esterase/lipase At5g03590 (344 aa).

An N-terminal signal peptide occupies residues 1–19; the sequence is MHYLMKLFFSLSLFFGING. The active-site Nucleophile is the serine 41. Asparagine 126, asparagine 227, and asparagine 238 each carry an N-linked (GlcNAc...) asparagine glycan. Residue aspartate 318 is part of the active site.

It belongs to the 'GDSL' lipolytic enzyme family.

Its subcellular location is the secreted. In Arabidopsis thaliana (Mouse-ear cress), this protein is GDSL esterase/lipase At5g03590.